The primary structure comprises 31 residues: Cytochrome b6-f complex subunit 6 (31 aa).

A helical membrane pass occupies residues 3-23; that stretch reads ALIGYILLMTLMFSLAAGLYF.

It belongs to the PetL family. The 4 large subunits of the cytochrome b6-f complex are cytochrome b6, subunit IV (17 kDa polypeptide, PetD), cytochrome f and the Rieske protein, while the 4 small subunits are PetG, PetL, PetM and PetN. The complex functions as a dimer.

The protein resides in the plastid. Its subcellular location is the chloroplast thylakoid membrane. Functionally, component of the cytochrome b6-f complex, which mediates electron transfer between photosystem II (PSII) and photosystem I (PSI), cyclic electron flow around PSI, and state transitions. PetL is important for photoautotrophic growth as well as for electron transfer efficiency and stability of the cytochrome b6-f complex. This Emiliania huxleyi (Coccolithophore) protein is Cytochrome b6-f complex subunit 6.